A 205-amino-acid chain; its full sequence is Putative lipoprotein LppC (205 aa).

An N-terminal signal peptide occupies residues 1-27 (MESPMTSTLHRTPLATAGLALVVALGG). C28 carries N-palmitoyl cysteine lipidation. A lipid anchor (S-diacylglycerol cysteine) is attached at C28. Residues 126–145 (GSTADGQTPAGGHSVPNSGG) are disordered.

The protein belongs to the UPF0098 family.

It localises to the cell membrane. The protein is Putative lipoprotein LppC (lppC) of Mycobacterium tuberculosis (strain CDC 1551 / Oshkosh).